Here is a 160-residue protein sequence, read N- to C-terminus: Keratin-associated protein 9-6 (160 aa).

Tandem repeats lie at residues 4–8 (CCSPG), 13–17 (CCRTT), 18–22 (CCRTT), 37–41 (CCQPS), 42–46 (CCVSS), 47–51 (CCQPY), 56–60 (CCQNT), 61–65 (CCRTT), 66–70 (CCQPT), 75–79 (CCQPS), 80–84 (CCSTP), 90–94 (CCGSS), 95–99 (CCGQT), 140–144 (CCQPC), 149–153 (CCVSS), and 154–158 (CCQHS). Residues 4–158 (CCSPGCQPTC…CCVSSCCQHS (155 aa)) are 16 X 5 AA repeats of C-C-[GSVRQ]-[QTSPHN]-[TPSGYC].

The protein belongs to the KRTAP type 9 family. Interacts with hair keratins.

In terms of biological role, in the hair cortex, hair keratin intermediate filaments are embedded in an interfilamentous matrix, consisting of hair keratin-associated proteins (KRTAP), which are essential for the formation of a rigid and resistant hair shaft through their extensive disulfide bond cross-linking with abundant cysteine residues of hair keratins. The matrix proteins include the high-sulfur and high-glycine-tyrosine keratins. This chain is Keratin-associated protein 9-6, found in Homo sapiens (Human).